The following is a 458-amino-acid chain: ATP synthase subunit beta (458 aa).

Position 148-155 (148-155) interacts with ATP; it reads GGAGVGKT.

It belongs to the ATPase alpha/beta chains family. F-type ATPases have 2 components, CF(1) - the catalytic core - and CF(0) - the membrane proton channel. CF(1) has five subunits: alpha(3), beta(3), gamma(1), delta(1), epsilon(1). CF(0) has three main subunits: a(1), b(2) and c(9-12). The alpha and beta chains form an alternating ring which encloses part of the gamma chain. CF(1) is attached to CF(0) by a central stalk formed by the gamma and epsilon chains, while a peripheral stalk is formed by the delta and b chains.

It is found in the cell inner membrane. It carries out the reaction ATP + H2O + 4 H(+)(in) = ADP + phosphate + 5 H(+)(out). Functionally, produces ATP from ADP in the presence of a proton gradient across the membrane. The catalytic sites are hosted primarily by the beta subunits. This is ATP synthase subunit beta from Actinobacillus succinogenes (strain ATCC 55618 / DSM 22257 / CCUG 43843 / 130Z).